A 668-amino-acid polypeptide reads, in one-letter code: DNA ligase (668 aa).

NAD(+) contacts are provided by residues 32-36 (DAEYD), 81-82 (SL), and E111. The N6-AMP-lysine intermediate role is filled by K113. R134, E171, K290, and K314 together coordinate NAD(+). Zn(2+) is bound by residues C408, C411, C426, and C432. Residues 591-668 (EEDLSLKGQT…DEEALIAILS (78 aa)) enclose the BRCT domain.

It belongs to the NAD-dependent DNA ligase family. LigA subfamily. Requires Mg(2+) as cofactor. Mn(2+) serves as cofactor.

It carries out the reaction NAD(+) + (deoxyribonucleotide)n-3'-hydroxyl + 5'-phospho-(deoxyribonucleotide)m = (deoxyribonucleotide)n+m + AMP + beta-nicotinamide D-nucleotide.. In terms of biological role, DNA ligase that catalyzes the formation of phosphodiester linkages between 5'-phosphoryl and 3'-hydroxyl groups in double-stranded DNA using NAD as a coenzyme and as the energy source for the reaction. It is essential for DNA replication and repair of damaged DNA. The chain is DNA ligase from Shewanella pealeana (strain ATCC 700345 / ANG-SQ1).